The chain runs to 300 residues: MILEGSGVMNLNPANNLLHQQPAWTDSYPTCNVSSGFFGSQWHEIHPQYWTKYQVWEWLQHLLDTNQLDASCIPFQEFDISGEHLCSMSLQEFTRAAGSAGQLLYSNLQHLKWNGQCSSDLFQSAHNVIVKTEQTDPSIMNTWKEENYLYDPSYGSTVDLLDSKTFCRAQISMTTSSHLPVAESPDMKKEQDHPVKSHTKKHNPRGTHLWEFIRDILLSPDKNPGLIKWEDRSEGIFRFLKSEAVAQLWGKKKNNSSMTYEKLSRAMRYYYKREILERVDGRRLVYKFGKNARGWRENEN.

The region spanning proline 29–glycine 115 is the PNT domain. Residues valine 181–asparagine 203 form a disordered region. Over residues proline 185–valine 195 the composition is skewed to basic and acidic residues. Residues threonine 207 to glycine 289 constitute a DNA-binding region (ETS).

The protein belongs to the ETS family. Highly expressed in kidney and lung, weakly in skeletal muscle, heart, and liver, and not detected in brain, spleen or testis.

Its subcellular location is the nucleus. In terms of biological role, transcriptional activator that may play a role in regulating epithelial cell differentiation and proliferation. May act as a repressor for a specific subset of ETS/AP-1-responsive genes, and as a modulator of the nuclear response to mitogen-activated protein kinase signaling cascades. Binds to DNA sequences containing the consensus nucleotide core sequence GGAA. Involved in regulation of TNFRSF10B/DR5 expression through Ets-binding sequences on the TNFRSF10B/DR5 promoter. The polypeptide is ETS homologous factor (Mus musculus (Mouse)).